The following is a 50-amino-acid chain: PsaJ-like protein asl3190 (50 aa).

A helical membrane pass occupies residues 21 to 41 (VLAVISISVAFSTWAIFNYIF).

Belongs to the PsaJ family.

The protein localises to the cellular thylakoid membrane. The polypeptide is PsaJ-like protein asl3190 (Nostoc sp. (strain PCC 7120 / SAG 25.82 / UTEX 2576)).